The chain runs to 335 residues: Probable peptide ABC transporter ATP-binding protein y4tR (335 aa).

The region spanning 15–264 (VRDLETHFYG…PTHPYTRALM (250 aa)) is the ABC transporter domain. Position 49–56 (49–56 (GESGCGKS)) interacts with ATP.

This sequence belongs to the ABC transporter superfamily.

It localises to the cell inner membrane. Probably part of a binding-protein-dependent transport system y4tOPQRS for a peptide. Probably responsible for energy coupling to the transport system. The polypeptide is Probable peptide ABC transporter ATP-binding protein y4tR (Sinorhizobium fredii (strain NBRC 101917 / NGR234)).